Reading from the N-terminus, the 75-residue chain is Sec-independent protein translocase protein TatA (75 aa).

The helical transmembrane segment at 1–21 threads the bilayer; sequence MFGLSPAQLIILLVVILLIFG.

Belongs to the TatA/E family. As to quaternary structure, the Tat system comprises two distinct complexes: a TatABC complex, containing multiple copies of TatA, TatB and TatC subunits, and a separate TatA complex, containing only TatA subunits. Substrates initially bind to the TatABC complex, which probably triggers association of the separate TatA complex to form the active translocon.

Its subcellular location is the cell inner membrane. In terms of biological role, part of the twin-arginine translocation (Tat) system that transports large folded proteins containing a characteristic twin-arginine motif in their signal peptide across membranes. TatA could form the protein-conducting channel of the Tat system. In Haemophilus influenzae (strain PittEE), this protein is Sec-independent protein translocase protein TatA.